The chain runs to 444 residues: Tubulin beta-2 chain (444 aa).

GTP-binding residues include Gln11, Glu69, Ser138, Gly142, Thr143, Gly144, Asn204, and Asn226. Glu69 is a binding site for Mg(2+). The tract at residues 422–444 (YQQYQDATAEEDDYDDGEGSTGD) is disordered. Positions 429–444 (TAEEDDYDDGEGSTGD) are enriched in acidic residues.

This sequence belongs to the tubulin family. As to quaternary structure, dimer of alpha and beta chains. A typical microtubule is a hollow water-filled tube with an outer diameter of 25 nm and an inner diameter of 15 nM. Alpha-beta heterodimers associate head-to-tail to form protofilaments running lengthwise along the microtubule wall with the beta-tubulin subunit facing the microtubule plus end conferring a structural polarity. Microtubules usually have 13 protofilaments but different protofilament numbers can be found in some organisms and specialized cells. The cofactor is Mg(2+). Found in areas of rapidly dividing tissues.

The protein localises to the cytoplasm. It is found in the cytoskeleton. Tubulin is the major constituent of microtubules, a cylinder consisting of laterally associated linear protofilaments composed of alpha- and beta-tubulin heterodimers. Microtubules grow by the addition of GTP-tubulin dimers to the microtubule end, where a stabilizing cap forms. Below the cap, tubulin dimers are in GDP-bound state, owing to GTPase activity of alpha-tubulin. In Daucus carota (Wild carrot), this protein is Tubulin beta-2 chain (TUBB2).